Reading from the N-terminus, the 672-residue chain is UvrABC system protein B (672 aa).

A Helicase ATP-binding domain is found at 26 to 181 (AGLEDGLAYQ…ILQRLAELQY (156 aa)). 39–46 (GVTGSGKT) provides a ligand contact to ATP. The short motif at 92-115 (YYDYYQPEAYVPSSDTYIEKDASI) is the Beta-hairpin element. Residues 430–592 (QVDDLLSEIK…ITPKSIQKAV (163 aa)) enclose the Helicase C-terminal domain. Residues 631–666 (AKELRKLEEQMYHHARNLEFEEAAAVRDKIQHIRKG) enclose the UVR domain.

Belongs to the UvrB family. As to quaternary structure, forms a heterotetramer with UvrA during the search for lesions. Interacts with UvrC in an incision complex.

It is found in the cytoplasm. The UvrABC repair system catalyzes the recognition and processing of DNA lesions. A damage recognition complex composed of 2 UvrA and 2 UvrB subunits scans DNA for abnormalities. Upon binding of the UvrA(2)B(2) complex to a putative damaged site, the DNA wraps around one UvrB monomer. DNA wrap is dependent on ATP binding by UvrB and probably causes local melting of the DNA helix, facilitating insertion of UvrB beta-hairpin between the DNA strands. Then UvrB probes one DNA strand for the presence of a lesion. If a lesion is found the UvrA subunits dissociate and the UvrB-DNA preincision complex is formed. This complex is subsequently bound by UvrC and the second UvrB is released. If no lesion is found, the DNA wraps around the other UvrB subunit that will check the other stand for damage. This is UvrABC system protein B from Coxiella burnetii (strain CbuG_Q212) (Coxiella burnetii (strain Q212)).